The primary structure comprises 444 residues: Endothelin-3 receptor (444 aa).

A signal peptide spans 1–18; sequence MATVILFVAWMACLMVGV. The Extracellular portion of the chain corresponds to 19-88; the sequence is CYQEFQTQQN…SRAKIRHAFK (70 aa). The N-linked (GlcNAc...) asparagine glycan is linked to Asn60. The chain crosses the membrane as a helical span at residues 89-113; it reads YVTTILSCVIFLVGIVGNSTLLRII. Over 114-124 the chain is Cytoplasmic; the sequence is YKNKCMRNGPN. The chain crosses the membrane as a helical span at residues 125–145; that stretch reads VLIASLALGDLFYILIAIPII. The Extracellular portion of the chain corresponds to 146–161; that stretch reads SISFWLSTGHSEYIYQ. A helical transmembrane segment spans residues 162–180; that stretch reads LVHLYRARVYSLSLCALSI. Residues 181–201 lie on the Cytoplasmic side of the membrane; it reads DRYRAVASWNRIRSIGIPVRK. A helical membrane pass occupies residues 202-226; the sequence is AIELTLIWAVAIIVAVPEAIAFNLV. Residues 227–254 are Extracellular-facing; sequence ELDFRGQTILVCMLPMEQTSDFMRFYQE. The helical transmembrane segment at 255–279 threads the bilayer; it reads VKVWWLFGFYFCLPLACTGVFYTLM. Over 280-307 the chain is Cytoplasmic; it reads SCEMLSIKNGMRIALNDHMKQRREVAKT. Residues 308-328 traverse the membrane as a helical segment; it reads VFCLVVIFALCWLPLHVSSIF. At 329–365 the chain is on the extracellular side; it reads VRLSATVKRACILKNKRSCIMAEIQTGVNYQLLMVMN. Residues 366–386 traverse the membrane as a helical segment; the sequence is YTGINMASLNSCIGPVALYFV. Residues 387–444 are Cytoplasmic-facing; it reads SRKFKNCFQSCLCCWCHRPTLTITPMDEKGSGGKWKANGHDLDLDRSSSRLSNKYSSS. The interval 416–444 is disordered; sequence GSGGKWKANGHDLDLDRSSSRLSNKYSSS. Residues 424-434 are compositionally biased toward basic and acidic residues; that stretch reads NGHDLDLDRSS. The segment covering 435 to 444 has biased composition (low complexity); that stretch reads SRLSNKYSSS.

This sequence belongs to the G-protein coupled receptor 1 family. Endothelin receptor subfamily.

The protein resides in the cell membrane. Receptor for endothelin-3. Mediates its action by association with G proteins that activate a phosphatidylinositol-calcium second messenger system. The protein is Endothelin-3 receptor of Xenopus laevis (African clawed frog).